Reading from the N-terminus, the 231-residue chain is tRNA (guanine-N(1)-)-methyltransferase (231 aa).

Residues G112 and 132–137 (IGDYIL) each bind S-adenosyl-L-methionine.

It belongs to the RNA methyltransferase TrmD family. Homodimer.

Its subcellular location is the cytoplasm. The enzyme catalyses guanosine(37) in tRNA + S-adenosyl-L-methionine = N(1)-methylguanosine(37) in tRNA + S-adenosyl-L-homocysteine + H(+). Its function is as follows. Specifically methylates guanosine-37 in various tRNAs. The polypeptide is tRNA (guanine-N(1)-)-methyltransferase (Sulfurimonas denitrificans (strain ATCC 33889 / DSM 1251) (Thiomicrospira denitrificans (strain ATCC 33889 / DSM 1251))).